Reading from the N-terminus, the 422-residue chain is Serine hydroxymethyltransferase (422 aa).

120–122 contacts (6S)-5,6,7,8-tetrahydrofolate; it reads GHI. The residue at position 226 (K226) is an N6-(pyridoxal phosphate)lysine. A (6S)-5,6,7,8-tetrahydrofolate-binding site is contributed by E241.

It belongs to the SHMT family. As to quaternary structure, homodimer. It depends on pyridoxal 5'-phosphate as a cofactor.

Its subcellular location is the cytoplasm. It catalyses the reaction 5,10-methylenetetrahydromethanopterin + glycine + H2O = 5,6,7,8-tetrahydromethanopterin + L-serine. Its pathway is amino-acid biosynthesis; glycine biosynthesis; glycine from L-serine: step 1/1. Its function is as follows. Catalyzes the reversible interconversion of serine and glycine with tetrahydromethanopterin (H4MPT) serving as the one-carbon carrier. Also exhibits a pteridine-independent aldolase activity toward beta-hydroxyamino acids, producing glycine and aldehydes, via a retro-aldol mechanism. The polypeptide is Serine hydroxymethyltransferase (Methanosphaera stadtmanae (strain ATCC 43021 / DSM 3091 / JCM 11832 / MCB-3)).